The sequence spans 459 residues: Taurine--pyruvate aminotransferase (459 aa).

At K287 the chain carries N6-(pyridoxal phosphate)lysine.

It belongs to the class-III pyridoxal-phosphate-dependent aminotransferase family. Pyridoxal 5'-phosphate is required as a cofactor.

The protein localises to the cytoplasm. The catalysed reaction is taurine + pyruvate = sulfoacetaldehyde + L-alanine. The protein operates within organosulfur degradation; taurine degradation via aerobic pathway; acetyl phosphate and sulfite from taurine: step 1/2. Its function is as follows. Catalyzes the degradation of taurine into alanine and sulfoacetaldehyde. This Rhodobacter capsulatus (strain ATCC BAA-309 / NBRC 16581 / SB1003) protein is Taurine--pyruvate aminotransferase.